The following is a 641-amino-acid chain: SH2 domain-containing protein A (641 aa).

The segment at 355–384 (VNGNGTSMEWRPQNHEEDNSSTDSENTEMR) is disordered. The SH2 domain maps to 547 to 641 (WIEGFVTKEE…SRLGRIIRGI (95 aa)).

In terms of processing, phosphorylated on tyrosine residues. Expressed in roots, leaves, stems and flowers.

The polypeptide is SH2 domain-containing protein A (Arabidopsis thaliana (Mouse-ear cress)).